Consider the following 676-residue polypeptide: MSTTVPLHASSFSSGTTGAGGGVQQALQLQHCAYHVGASVGSSGSALNNNSINVPNNNTMGMSSAGSSNGSNLVNGQQRSTRGASKQRRDQINVEIQKLRDLLPLSDLIKDRLFQLQVMSLGCIFIRKHRYQQTVLQPQLQMLQMQMSSPMPRGIDICKALRGFMLMVTRSGKILHVSDNASEYLGHSVEEIMCQGDSIYDLVDGRDHGAVQAELASGPPGAATFPEERVFICRLNLARTAKRQLQYHKFVLFQGRYIQPAEFYQQLNAQNSQPDCDQPVFSAYCQPLINPENAEGMSTGNTHVFSTQHYLDMKFKEADTMASQHLGFSKEQLKGMSWYGMIHPNHVPEIAHKHRLLCQEKEGSVLALIRLQAANGEWIWLHTVFSIRPNNELNSDGKRLRHVIHCFHQKLTDLEAATLQANSWIYSMRHTYPTVFSCQDSPPPSEEQQPSSPQTPPFTEQPPMLVEQKPLIGAGIAPGFPSLDYNQIKVEIPMRPINTQIPLFTPESSSPESSASLHTSLLPHHNAFPLDILEDILPSNDVLPELKDEVDEILRQVEQSPATSPAHSFPSNVNFGHRHSMPNAFDSAELYKYLGPALFDGNFAMQHQHHLQQQHQSQPNHPLQMTPIPPMSCPPSNYGQSNFLFHHQHLNQHLHHSQPPHPYHFDYYNRKRSWAV.

The span at 45–72 shows a compositional bias: low complexity; sequence SALNNNSINVPNNNTMGMSSAGSSNGSN. The interval 45 to 89 is disordered; it reads SALNNNSINVPNNNTMGMSSAGSSNGSNLVNGQQRSTRGASKQRR. A compositionally biased stretch (polar residues) spans 73–84; it reads LVNGQQRSTRGA. The tract at residues 76 to 89 is basic motif; that stretch reads GQQRSTRGASKQRR. A bHLH domain is found at 76-129; it reads GQQRSTRGASKQRRDQINVEIQKLRDLLPLSDLIKDRLFQLQVMSLGCIFIRKH. Positions 90–129 are helix-loop-helix motif; sequence DQINVEIQKLRDLLPLSDLIKDRLFQLQVMSLGCIFIRKH. In terms of domain architecture, PAS spans 165–215; that stretch reads MLMVTRSGKILHVSDNASEYLGHSVEEIMCQGDSIYDLVDGRDHGAVQAEL. The interval 436 to 462 is disordered; it reads FSCQDSPPPSEEQQPSSPQTPPFTEQP.

Heterodimer; efficient DNA binding requires dimerization with another bHLH protein. Forms a heterodimer with ARNT homolog aha-1; binds DNA as heterodimer.

The protein resides in the nucleus. Its function is as follows. Transcription factor. Efficient DNA binding requires dimerization with another bHLH protein, such as ARNT homolog aha-1. Regulates transcription of target genes, probably acting in complex with aha-1. This is PAS domain-containing protein cky-1 from Caenorhabditis elegans.